Reading from the N-terminus, the 439-residue chain is Aspartate--tRNA(Asp/Asn) ligase (439 aa).

Glu177 is an L-aspartate binding site. The interval 199-202 (QLYK) is aspartate. L-aspartate is bound at residue Arg221. ATP-binding positions include 221-223 (RAE), 229-231 (RHL), and Glu362. Residues Glu362 and Ser365 each contribute to the Mg(2+) site. L-aspartate contacts are provided by Ser365 and Arg369. Residue 410 to 413 (GADR) participates in ATP binding.

This sequence belongs to the class-II aminoacyl-tRNA synthetase family. Type 2 subfamily. Homodimer. Requires Mg(2+) as cofactor.

It is found in the cytoplasm. The catalysed reaction is tRNA(Asx) + L-aspartate + ATP = L-aspartyl-tRNA(Asx) + AMP + diphosphate. Functionally, aspartyl-tRNA synthetase with relaxed tRNA specificity since it is able to aspartylate not only its cognate tRNA(Asp) but also tRNA(Asn). Reaction proceeds in two steps: L-aspartate is first activated by ATP to form Asp-AMP and then transferred to the acceptor end of tRNA(Asp/Asn). The protein is Aspartate--tRNA(Asp/Asn) ligase of Methanosphaera stadtmanae (strain ATCC 43021 / DSM 3091 / JCM 11832 / MCB-3).